Here is a 1134-residue protein sequence, read N- to C-terminus: DNA damage-binding protein 1 (1134 aa).

This sequence belongs to the DDB1 family. As to quaternary structure, interacts with cdt-1 and cul-4. Expressed at high levels in the spermatheca of adult hermaphrodites.

Its subcellular location is the cytoplasm. It localises to the nucleus. It functions in the pathway protein modification; protein ubiquitination. Its function is as follows. Plays a role in DNA repair. May be a component of an E3 ubiquitin-protein ligase which promotes histone ubiquitination in response to UV irradiation. Histone ubiquitination may be important for subsequent DNA repair. Promotes the degradation of the replication licensing factor cdt-1 during S-phase, thereby preventing rereplication of DNA during a single round of cell division. This Caenorhabditis elegans protein is DNA damage-binding protein 1 (ddb-1).